The sequence spans 187 residues: Rusticyanin (187 aa).

A signal peptide spans 1-32; sequence MYTQNTMKKNWYVTVGAAAALAATVGMGTAMA. The 103-residue stretch at 85–187 folds into the Plastocyanin-like domain; sequence SFEVHDKKNP…TGMFGKIIVK (103 aa). Residues histidine 117, cysteine 170, histidine 175, and methionine 180 each coordinate Cu cation.

In terms of assembly, monomer. It depends on Cu cation as a cofactor.

It is found in the periplasm. Electron carrier from cytochrome c552 to the A-type oxidase. This Acidithiobacillus ferridurans protein is Rusticyanin (rus).